Here is a 460-residue protein sequence, read N- to C-terminus: Argininosuccinate lyase (460 aa).

Belongs to the lyase 1 family. Argininosuccinate lyase subfamily.

The protein resides in the cytoplasm. It catalyses the reaction 2-(N(omega)-L-arginino)succinate = fumarate + L-arginine. Its pathway is amino-acid biosynthesis; L-arginine biosynthesis; L-arginine from L-ornithine and carbamoyl phosphate: step 3/3. The polypeptide is Argininosuccinate lyase (Rhodopirellula baltica (strain DSM 10527 / NCIMB 13988 / SH1)).